The sequence spans 987 residues: Ephrin type-B receptor 4 (987 aa).

Positions 1–15 are cleaved as a signal peptide; it reads MELRALLCWASLATA. Topologically, residues 16 to 539 are extracellular; sequence LEETLLNTKL…ESESWREQLA (524 aa). An Eph LBD domain is found at 17–202; that stretch reads EETLLNTKLE…FYKKCSWLIT (186 aa). Intrachain disulfides connect Cys-61/Cys-184 and Cys-97/Cys-107. Residues Asn-203, Asn-335, and Asn-426 are each glycosylated (N-linked (GlcNAc...) asparagine). Fibronectin type-III domains follow at residues 323–432 and 436–529; these read PPSA…TDRE and AVSD…TQLD. A helical membrane pass occupies residues 540 to 560; sequence LIAGTAVVGVVLVLVVVIIAV. Over 561–987 the chain is Cytoplasmic; that stretch reads LCLRKQSNGR…GGTGGPAQQF (427 aa). The 285-residue stretch at 615–899 folds into the Protein kinase domain; that stretch reads VKIEEVIGAG…ENGGASHPLL (285 aa). ATP is bound by residues 621–629 and Lys-647; that span reads IGAGEFGEV. Asp-740 (proton acceptor) is an active-site residue. A phosphoserine mark is found at Ser-769, Ser-770, Ser-911, and Ser-943. The 65-residue stretch at 907–971 folds into the SAM domain; it reads SAFGSVGEWL…LASVQHMKSQ (65 aa). A disordered region spans residues 965–987; sequence VQHMKSQAKPGAPGGTGGPAQQF. Residues 976-987 are compositionally biased toward gly residues; that stretch reads APGGTGGPAQQF. Residues 985–987 carry the PDZ-binding motif; sequence QQF.

Belongs to the protein kinase superfamily. Tyr protein kinase family. Ephrin receptor subfamily. Heterotetramer upon binding of the ligand. The heterotetramer is composed of an ephrin dimer and a receptor dimer. Oligomerization is probably required to induce biological responses. Interacts with RASA1; the interaction depends on EPHB4 tyrosine-phosphorylation. In terms of processing, phosphorylated; autophosphorylation is stimulated by EFNB2. As to expression, expressed in various organ systems, including lung, liver, kidney, intestine, muscle and heart. Expressed in myogenic progenitor cells.

The protein resides in the cell membrane. It carries out the reaction L-tyrosyl-[protein] + ATP = O-phospho-L-tyrosyl-[protein] + ADP + H(+). In terms of biological role, receptor tyrosine kinase which binds promiscuously transmembrane ephrin-B family ligands residing on adjacent cells, leading to contact-dependent bidirectional signaling into neighboring cells. The signaling pathway downstream of the receptor is referred to as forward signaling while the signaling pathway downstream of the ephrin ligand is referred to as reverse signaling. Together with its cognate ligand/functional ligand EFNB2 it is involved in the regulation of cell adhesion and migration, and plays a central role in heart morphogenesis, angiogenesis and blood vessel remodeling and permeability. EPHB4-mediated forward signaling controls cellular repulsion and segregation from EFNB2-expressing cells. The sequence is that of Ephrin type-B receptor 4 (Ephb4) from Mus musculus (Mouse).